The sequence spans 402 residues: ORC1-type DNA replication protein 17 (402 aa).

Positions 223 and 235 each coordinate ATP.

This sequence belongs to the CDC6/cdc18 family.

Involved in regulation of DNA replication. This Haloarcula marismortui (strain ATCC 43049 / DSM 3752 / JCM 8966 / VKM B-1809) (Halobacterium marismortui) protein is ORC1-type DNA replication protein 17 (cdc6q).